A 194-amino-acid polypeptide reads, in one-letter code: Dihydrofolate reductase HdrB (194 aa).

The 177-residue stretch at 18–194 (RFVLVAAVAD…ADRGAEESDE (177 aa)) folds into the DHFR domain. Residues Ala-24 and 30–36 (VIGRDGT) each bind NADP(+). Asp-44 lines the substrate pocket. An NADP(+)-binding site is contributed by 62–63 (KT). Residues Arg-69 and Arg-78 each contribute to the substrate site. NADP(+) is bound by residues 84-85 (TT) and 123-130 (GGATVYEQ). Position 141 (Thr-141) interacts with substrate. A disordered region spans residues 173-194 (SFVTYERKQPAAADRGAEESDE).

This sequence belongs to the dihydrofolate reductase family.

It catalyses the reaction (6S)-5,6,7,8-tetrahydrofolate + NADP(+) = 7,8-dihydrofolate + NADPH + H(+). It functions in the pathway cofactor biosynthesis; tetrahydrofolate biosynthesis; 5,6,7,8-tetrahydrofolate from 7,8-dihydrofolate: step 1/1. With respect to regulation, maximum activity at KCl concentration of 0.5 M and activity decreases with increasing concentration of KCl. Its function is as follows. Key enzyme in folate metabolism. Catalyzes an essential reaction for de novo glycine and purine synthesis, and for DNA precursor synthesis. This Haloferax volcanii (Halobacterium volcanii) protein is Dihydrofolate reductase HdrB (hdrB).